The following is a 355-amino-acid chain: Phosphate acyltransferase (355 aa).

The protein belongs to the PlsX family. In terms of assembly, homodimer. Probably interacts with PlsY.

The protein resides in the cytoplasm. The enzyme catalyses a fatty acyl-[ACP] + phosphate = an acyl phosphate + holo-[ACP]. Its pathway is lipid metabolism; phospholipid metabolism. Functionally, catalyzes the reversible formation of acyl-phosphate (acyl-PO(4)) from acyl-[acyl-carrier-protein] (acyl-ACP). This enzyme utilizes acyl-ACP as fatty acyl donor, but not acyl-CoA. The chain is Phosphate acyltransferase from Rhodospirillum centenum (strain ATCC 51521 / SW).